The following is a 565-amino-acid chain: NAD-dependent malic enzyme (565 aa).

The active-site Proton donor is the Tyr104. Arg157 lines the NAD(+) pocket. Residue Lys175 is the Proton acceptor of the active site. A divalent metal cation contacts are provided by Glu246, Asp247, and Asp270. Positions 270 and 418 each coordinate NAD(+).

The protein belongs to the malic enzymes family. In terms of assembly, homotetramer. Requires Mg(2+) as cofactor. Mn(2+) serves as cofactor.

The enzyme catalyses (S)-malate + NAD(+) = pyruvate + CO2 + NADH. It carries out the reaction oxaloacetate + H(+) = pyruvate + CO2. The chain is NAD-dependent malic enzyme from Salmonella heidelberg (strain SL476).